Consider the following 727-residue polypeptide: Phenylalanine ammonia-lyase str11 (727 aa).

Tyr105 (proton donor/acceptor) is an active-site residue. The segment at residues 210 to 212 is a cross-link (5-imidazolinone (Ala-Gly)); sequence ASG. Ser211 carries the post-translational modification 2,3-didehydroalanine (Ser). (E)-cinnamate-binding residues include Asn271, Gln361, Arg367, Asn397, Lys468, Glu496, and Asn499.

Belongs to the PAL/histidase family. Contains an active site 4-methylidene-imidazol-5-one (MIO), which is formed autocatalytically by cyclization and dehydration of residues Ala-Ser-Gly.

The catalysed reaction is L-phenylalanine = (E)-cinnamate + NH4(+). Its pathway is mycotoxin biosynthesis. In terms of biological role, phenylalanine ammonia-lyase; part of the gene cluster that mediates the biosynthesis of strobilurin A, an antifungal polyketide that contains a key beta-methoxyacrylate toxophore that targets the complex III of the mitochondrial electron transport chain. Strobilurin biosynthesis begins with construction of benzoyl CoA by step-wise elimination of ammonia from phenylalanine by the phenylalanine ammonia-lyase str11, oxygenation by str8 and retro-Claisen reaction to form benzoic acid, which is activated to its CoA thiolester benzoyl CoA by the dedicated CoA ligase str10. Benzoyl CoA forms the starter unit for the highly reducing polyketide synthase stpks1 that produces the polyketide prestrobilutin A. The FAD-dependent oxygenase str9 then catalyzes the key oxidative rearrangement responsible for the creation of the beta-methoxyacrylate toxophore. Str9 performs epoxidation of the 2,3 olefin of prestrobilutin A, followed by Meinwald rearrangement to furnish the aldehyde intermediate. Rapid enolization of the aldehyde intermediate would give the beta-methoxyacrylate skeleton and methylations catalyzed by str2 and str3 complete the synthesis and lead to the production of strobilurin A. The short-chain dehydrogenase stl2 and the dehydrogenase str4 play a role in the shunt pathway leading to the production of bolineol. The cluster encodes no obvious halogenase gene that could be involved in production of strobilurin B, nor any obvious dimethylallyl-transferase that could be involved in the production of strobilurin G. It is possible that unknown proteins encoded in, or near, the cluster (such as str1 or stl1) may form new classes of halogenases or dimethylally-transferases, or that the responsible genes are located elsewhere on the genome. Similarly, proteins encoded by str5/str6 hydrolases appear to have no chemical role in the biosynthesis of strobilurin A. Finally, no obvious self-resistance gene is found within the cluster. The sequence is that of Phenylalanine ammonia-lyase str11 from Strobilurus tenacellus.